We begin with the raw amino-acid sequence, 296 residues long: NADH-cytochrome b5 reductase 2 (296 aa).

Residues 2–24 (LVALAAIGVTVLLFLIKALGSGA) traverse the membrane as a helical segment. One can recognise an FAD-binding FR-type domain in the interval 35–147 (NAKYPLPLIE…RGPNGLLVYK (113 aa)). FAD contacts are provided by residues 127 to 142 (DSLK…GPNG) and 166 to 201 (VAKH…KCYL).

The protein belongs to the flavoprotein pyridine nucleotide cytochrome reductase family. FAD is required as a cofactor.

It localises to the membrane. It catalyses the reaction 2 Fe(III)-[cytochrome b5] + NADH = 2 Fe(II)-[cytochrome b5] + NAD(+) + H(+). In terms of biological role, NADH-cytochrome b5 reductases are involved in desaturation and elongation of fatty acids, cholesterol biosynthesis and drug metabolism. The polypeptide is NADH-cytochrome b5 reductase 2 (cyb5r2) (Xenopus laevis (African clawed frog)).